A 779-amino-acid chain; its full sequence is Acyl-CoA dehydrogenase family member 11 (779 aa).

Lysine 175 carries the N6-acetyllysine modification. Serine 210 bears the Phosphoserine mark. Tyrosine 323 is subject to Phosphotyrosine. N6-succinyllysine is present on residues lysine 368 and lysine 390. FAD is bound by residues phenylalanine 503 to serine 513, serine 511 to serine 513, tryptophan 537 to serine 539, and serine 539. A substrate-binding site is contributed by serine 513. Substrate is bound at residue glycine 628–arginine 631. FAD-binding positions include arginine 656, glutamine 726, and glutamine 726–glycine 730. Glycine 754 contacts substrate. FAD-binding positions include proline 755 to glutamate 757 and glutamate 757. Lysine 765 carries the N6-acetyllysine modification.

The protein belongs to the acyl-CoA dehydrogenase family. As to quaternary structure, homodimer. Requires FAD as cofactor.

The protein localises to the peroxisome. It is found in the mitochondrion membrane. It carries out the reaction a 2,3-saturated acyl-CoA + oxidized [electron-transfer flavoprotein] + H(+) = a (2E)-enoyl-CoA + reduced [electron-transfer flavoprotein]. It catalyses the reaction docosanoyl-CoA + oxidized [electron-transfer flavoprotein] + H(+) = (2E)-docosenoyl-CoA + reduced [electron-transfer flavoprotein]. The enzyme catalyses tetracosanoyl-CoA + oxidized [electron-transfer flavoprotein] + H(+) = (2E)-tetracosenoyl-CoA + reduced [electron-transfer flavoprotein]. The catalysed reaction is eicosanoyl-CoA + oxidized [electron-transfer flavoprotein] + H(+) = (2E)-eicosenoyl-CoA + reduced [electron-transfer flavoprotein]. It carries out the reaction hexacosanoyl-CoA + oxidized [electron-transfer flavoprotein] + H(+) = (2E)-hexacosenoyl-CoA + reduced [electron-transfer flavoprotein]. It catalyses the reaction tricosanoyl-CoA + oxidized [electron-transfer flavoprotein] + H(+) = (2E)-tricosenoyl-CoA + reduced [electron-transfer flavoprotein]. It functions in the pathway lipid metabolism; fatty acid beta-oxidation. Its function is as follows. Acyl-CoA dehydrogenase, that exhibits maximal activity towards saturated C22-CoA. Probably participates in beta-oxydation and energy production but could also play a role in the metabolism of specific fatty acids to control fatty acids composition of cellular lipids in brain. The protein is Acyl-CoA dehydrogenase family member 11 (Acad11) of Rattus norvegicus (Rat).